Here is a 476-residue protein sequence, read N- to C-terminus: RNA-splicing ligase RtcB homolog (476 aa).

5 residues coordinate Mn(2+): D90, C93, H198, H230, and H324. Residue 197-201 coordinates GMP; sequence NHYAE. GMP contacts are provided by residues 324–325, 373–376, S380, 399–402, and K475; these read HN, GGTM, and HGAG. H399 (GMP-histidine intermediate) is an active-site residue.

This sequence belongs to the RtcB family. As to quaternary structure, catalytic component of the tRNA-splicing ligase complex. It depends on Mn(2+) as a cofactor.

It carries out the reaction a 3'-end 3'-phospho-ribonucleotide-RNA + a 5'-end dephospho-ribonucleoside-RNA + GTP = a ribonucleotidyl-ribonucleotide-RNA + GMP + diphosphate. The catalysed reaction is a 3'-end 2',3'-cyclophospho-ribonucleotide-RNA + a 5'-end dephospho-ribonucleoside-RNA + GTP + H2O = a ribonucleotidyl-ribonucleotide-RNA + GMP + diphosphate + H(+). Functionally, catalytic subunit of the tRNA-splicing ligase complex that acts by directly joining spliced tRNA halves to mature-sized tRNAs by incorporating the precursor-derived splice junction phosphate into the mature tRNA as a canonical 3',5'-phosphodiester. May act as an RNA ligase with broad substrate specificity, and may function toward other RNAs. This Chlamydomonas reinhardtii (Chlamydomonas smithii) protein is RNA-splicing ligase RtcB homolog.